The primary structure comprises 640 residues: Chaperone protein HtpG (640 aa).

Positions 1 to 348 (MADVAHQETH…SNDLPLNVSR (348 aa)) are a; substrate-binding. A b region spans residues 349 to 565 (EILQDNKITQ…GTGMSTQMIK (217 aa)). The c stretch occupies residues 566 to 640 (LMQAAGQPVP…LNTLLMNLAK (75 aa)).

Belongs to the heat shock protein 90 family. As to quaternary structure, homodimer.

It is found in the cytoplasm. In terms of biological role, molecular chaperone. Has ATPase activity. In Pseudoalteromonas atlantica (strain T6c / ATCC BAA-1087), this protein is Chaperone protein HtpG.